We begin with the raw amino-acid sequence, 331 residues long: Ketol-acid reductoisomerase (NADP(+)) (331 aa).

The 181-residue stretch at 2–182 folds into the KARI N-terminal Rossmann domain; that stretch reads ARMYYDADAN…GGTRAGILET (181 aa). NADP(+)-binding positions include 25-28, S51, S53, and 83-86; these read YGSQ and DEVQ. The active site involves H108. G134 provides a ligand contact to NADP(+). A KARI C-terminal knotted domain is found at 183–328; that stretch reads SFREETETDL…KDLRAMFSWL (146 aa). Mg(2+) contacts are provided by D191, E195, E227, and E231. Substrate is bound at residue S252.

Belongs to the ketol-acid reductoisomerase family. Mg(2+) is required as a cofactor.

The catalysed reaction is (2R)-2,3-dihydroxy-3-methylbutanoate + NADP(+) = (2S)-2-acetolactate + NADPH + H(+). The enzyme catalyses (2R,3R)-2,3-dihydroxy-3-methylpentanoate + NADP(+) = (S)-2-ethyl-2-hydroxy-3-oxobutanoate + NADPH + H(+). The protein operates within amino-acid biosynthesis; L-isoleucine biosynthesis; L-isoleucine from 2-oxobutanoate: step 2/4. Its pathway is amino-acid biosynthesis; L-valine biosynthesis; L-valine from pyruvate: step 2/4. Its function is as follows. Involved in the biosynthesis of branched-chain amino acids (BCAA). Catalyzes an alkyl-migration followed by a ketol-acid reduction of (S)-2-acetolactate (S2AL) to yield (R)-2,3-dihydroxy-isovalerate. In the isomerase reaction, S2AL is rearranged via a Mg-dependent methyl migration to produce 3-hydroxy-3-methyl-2-ketobutyrate (HMKB). In the reductase reaction, this 2-ketoacid undergoes a metal-dependent reduction by NADPH to yield (R)-2,3-dihydroxy-isovalerate. In Crocosphaera subtropica (strain ATCC 51142 / BH68) (Cyanothece sp. (strain ATCC 51142)), this protein is Ketol-acid reductoisomerase (NADP(+)).